The primary structure comprises 177 residues: Large ribosomal subunit protein uL10 (177 aa).

The protein belongs to the universal ribosomal protein uL10 family. As to quaternary structure, part of the ribosomal stalk of the 50S ribosomal subunit. The N-terminus interacts with L11 and the large rRNA to form the base of the stalk. The C-terminus forms an elongated spine to which L12 dimers bind in a sequential fashion forming a multimeric L10(L12)X complex.

In terms of biological role, forms part of the ribosomal stalk, playing a central role in the interaction of the ribosome with GTP-bound translation factors. This Xanthomonas oryzae pv. oryzae (strain MAFF 311018) protein is Large ribosomal subunit protein uL10.